The following is a 953-amino-acid chain: UvrABC system protein A (953 aa).

33–40 contributes to the ATP binding site; it reads GLSGSGKS. 2 ABC transporter domains span residues 320–599 and 619–949; these read WGST…EESI and GHDN…RYLK. Position 652–659 (652–659) interacts with ATP; that stretch reads GVSGSGKS. The C4-type zinc finger occupies 752-778; the sequence is CEACQGDGLIKIEMHFLPDVYVKCDIC.

Belongs to the ABC transporter superfamily. UvrA family. In terms of assembly, forms a heterotetramer with UvrB during the search for lesions.

It is found in the cytoplasm. The UvrABC repair system catalyzes the recognition and processing of DNA lesions. UvrA is an ATPase and a DNA-binding protein. A damage recognition complex composed of 2 UvrA and 2 UvrB subunits scans DNA for abnormalities. When the presence of a lesion has been verified by UvrB, the UvrA molecules dissociate. This is UvrABC system protein A from Rickettsia typhi (strain ATCC VR-144 / Wilmington).